We begin with the raw amino-acid sequence, 72 residues long: Delta-actitoxin-Avd2b 3 (72 aa).

The signal sequence occupies residues M1–A21. Positions N22–G42 are excised as a propeptide. 3 cysteine pairs are disulfide-bonded: C47-C62, C48-C56, and C50-C67.

It belongs to the sea anemone short toxin (type III) family.

It is found in the secreted. It localises to the nematocyst. Functionally, voltage-gated sodium channel (Nav) inhibitor. 1 uM completely inhibits insect voltage-gated sodium channel inactivation (DmNav1 from D.melanogaster). The chain is Delta-actitoxin-Avd2b 3 from Anemonia viridis (Snakelocks anemone).